Here is a 351-residue protein sequence, read N- to C-terminus: MTIAIGREQERGWFDLMDDWLKRDRFVFIGWSGLLLFPCSYLALGAWFTGTTFVTSWYTHGLASSYLEGCNFLTAAVSSPANSMGHSLLFLWGPEAQGDFTRWCQIGGLWTFTALHGAFGLIGFCLRQFEIARLVGLRPYNAIAFSGPIAVFVSVFLLYPLGQASWFFAPSFGVAGIFRFILFLQGFHNWTLNPFHMMGVAGILGGALLCAIHGATVQNTLFEDGEASDTFRAFTPTQSEETYSMVTANRFWSQIFGVAFSNKRWLHFFLLFVPVAGLWASSIGIVGLALNLRAYDFVSQELRAAEDPEFETFYTKNILLNEGIRAWMAAQDQPHENFVFPEEVLPRGNAL.

A helical transmembrane segment spans residues 39–59 (CSYLALGAWFTGTTFVTSWYT). Residue histidine 116 participates in chlorophyll a binding. The chain crosses the membrane as a helical span at residues 123–139 (GFCLRQFEIARLVGLRP). The pheophytin a site is built by glutamine 128 and asparagine 141. Residues 151-164 (VFVSVFLLYPLGQA) traverse the membrane as a helical segment. Position 196 (histidine 196) interacts with chlorophyll a. The helical transmembrane segment at 206–226 (GALLCAIHGATVQNTLFEDGE) threads the bilayer. Residues histidine 213 and phenylalanine 260 each contribute to the a plastoquinone site. Residue histidine 213 participates in Fe cation binding. Position 267 (histidine 267) interacts with Fe cation. The helical transmembrane segment at 277-293 (GLWASSIGIVGLALNLR) threads the bilayer.

The protein belongs to the reaction center PufL/M/PsbA/D family. As to quaternary structure, PSII is composed of 1 copy each of membrane proteins PsbA, PsbB, PsbC, PsbD, PsbE, PsbF, PsbH, PsbI, PsbJ, PsbK, PsbL, PsbM, PsbT, PsbX, PsbY, PsbZ, Psb30/Ycf12, at least 3 peripheral proteins of the oxygen-evolving complex and a large number of cofactors. It forms dimeric complexes. Requires The D1/D2 heterodimer binds P680, chlorophylls that are the primary electron donor of PSII, and subsequent electron acceptors. It shares a non-heme iron and each subunit binds pheophytin, quinone, additional chlorophylls, carotenoids and lipids. There is also a Cl(-1) ion associated with D1 and D2, which is required for oxygen evolution. The PSII complex binds additional chlorophylls, carotenoids and specific lipids. as cofactor.

The protein resides in the plastid. It is found in the chloroplast thylakoid membrane. It carries out the reaction 2 a plastoquinone + 4 hnu + 2 H2O = 2 a plastoquinol + O2. Photosystem II (PSII) is a light-driven water:plastoquinone oxidoreductase that uses light energy to abstract electrons from H(2)O, generating O(2) and a proton gradient subsequently used for ATP formation. It consists of a core antenna complex that captures photons, and an electron transfer chain that converts photonic excitation into a charge separation. The D1/D2 (PsbA/PsbD) reaction center heterodimer binds P680, the primary electron donor of PSII as well as several subsequent electron acceptors. D2 is needed for assembly of a stable PSII complex. This chain is Photosystem II D2 protein, found in Cyanidioschyzon merolae (strain NIES-3377 / 10D) (Unicellular red alga).